A 241-amino-acid polypeptide reads, in one-letter code: Peroxisomal membrane protein 11C (241 aa).

Topologically, residues 1–122 (MALLNRLASA…ADAKVLRVDS (122 aa)) are cytoplasmic. Residues 123-149 (AWWWTLNTALWTLSLLLGAVKALWTML) form a helical membrane-spanning segment. At 150 to 211 (KLRQKLRSPT…GVLWAGRFPP (62 aa)) the chain is on the lumenal side. The helical transmembrane segment at 212 to 227 (WLVGLMGTISSILSTC) threads the bilayer. Residues 228-241 (QAVRAGRQAEADSP) lie on the Cytoplasmic side of the membrane.

The protein belongs to the peroxin-11 family. In terms of assembly, homodimer. Heterodimer with either PEX11A or PEX11B. Interacts with FIS1. Expressed in liver and at much lower levels in heart, kidney and testis.

The protein localises to the peroxisome membrane. Promotes membrane protrusion and elongation on the peroxisomal surface. The polypeptide is Peroxisomal membrane protein 11C (Pex11g) (Mus musculus (Mouse)).